Here is a 234-residue protein sequence, read N- to C-terminus: Glucosamine-6-phosphate deaminase (234 aa).

Catalysis depends on Asp-62, which acts as the Proton acceptor; for enolization step. Asn-128 functions as the For ring-opening step in the catalytic mechanism. The Proton acceptor; for ring-opening step role is filled by His-130. Glu-135 acts as the For ring-opening step in catalysis.

It belongs to the glucosamine/galactosamine-6-phosphate isomerase family. NagB subfamily.

It catalyses the reaction alpha-D-glucosamine 6-phosphate + H2O = beta-D-fructose 6-phosphate + NH4(+). It participates in amino-sugar metabolism; N-acetylneuraminate degradation; D-fructose 6-phosphate from N-acetylneuraminate: step 5/5. Catalyzes the reversible isomerization-deamination of glucosamine 6-phosphate (GlcN6P) to form fructose 6-phosphate (Fru6P) and ammonium ion. The sequence is that of Glucosamine-6-phosphate deaminase from Streptococcus suis (strain 98HAH33).